A 311-amino-acid polypeptide reads, in one-letter code: Bifunctional pinoresinol-lariciresinol reductase (311 aa).

Residues 10-16 (GGTGYLG), R35, and K44 contribute to the NADP(+) site. The Proton acceptor role is filled by K138. An NADP(+)-binding site is contributed by R142. H270 lines the substrate pocket.

This sequence belongs to the NmrA-type oxidoreductase family. Isoflavone reductase subfamily. In terms of assembly, dimer. As to expression, expressed in rhizomes, stems, and leaves.

It carries out the reaction (-)-secoisolariciresinol + NADP(+) = (+)-lariciresinol + NADPH + H(+). The enzyme catalyses (+)-lariciresinol + NADP(+) = (+)-pinoresinol + NADPH + H(+). It participates in aromatic compound metabolism; phenylpropanoid biosynthesis. In terms of biological role, reductase involved in lignan biosynthesis. Also involved in the biosynthesis of etoposide, a chemotherapeutic compound of the topoisomerase inhibitor family. Catalyzes the enantioselective sequential conversion of (+)-pinoresinol into (+)-lariciresinol and of (+)-lariciresinol into (-)-secoisolariciresinol. Abstracts the 4R-hydride from the NADPH cofactor during catalysis. This Sinopodophyllum hexandrum (Himalayan may apple) protein is Bifunctional pinoresinol-lariciresinol reductase.